Here is a 418-residue protein sequence, read N- to C-terminus: Glutamyl-tRNA reductase (418 aa).

Residues Thr-51–Arg-54, Ser-107, Glu-112–Gln-114, and Gln-118 each bind substrate. Cys-52 (nucleophile) is an active-site residue. Gly-187–Ala-192 contacts NADP(+).

It belongs to the glutamyl-tRNA reductase family. As to quaternary structure, homodimer.

The enzyme catalyses (S)-4-amino-5-oxopentanoate + tRNA(Glu) + NADP(+) = L-glutamyl-tRNA(Glu) + NADPH + H(+). The protein operates within porphyrin-containing compound metabolism; protoporphyrin-IX biosynthesis; 5-aminolevulinate from L-glutamyl-tRNA(Glu): step 1/2. In terms of biological role, catalyzes the NADPH-dependent reduction of glutamyl-tRNA(Glu) to glutamate 1-semialdehyde (GSA). The sequence is that of Glutamyl-tRNA reductase from Dichelobacter nodosus (strain VCS1703A).